A 350-amino-acid chain; its full sequence is N-acetyllactosaminide beta-1,3-N-acetylglucosaminyltransferase 4 (350 aa).

Residues methionine 1 to arginine 4 lie on the Cytoplasmic side of the membrane. A helical; Signal-anchor for type II membrane protein transmembrane segment spans residues leucine 5–lysine 25. The Lumenal portion of the chain corresponds to glutamate 26 to proline 350. 2 N-linked (GlcNAc...) asparagine glycosylation sites follow: asparagine 53 and asparagine 166.

This sequence belongs to the glycosyltransferase 31 family.

It localises to the golgi apparatus membrane. The catalysed reaction is a beta-D-galactosyl-(1-&gt;4)-N-acetyl-beta-D-glucosaminyl derivative + UDP-N-acetyl-alpha-D-glucosamine = an N-acetyl-beta-D-glucosaminyl-(1-&gt;3)-beta-D-galactosyl-(1-&gt;4)-N-acetyl-beta-D-glucosaminyl derivative + UDP + H(+). The protein operates within protein modification; protein glycosylation. Functionally, beta-1,3-N-acetylglucosaminyltransferase involved in the synthesis of poly-N-acetyllactosamine. Has activity for type 2 oligosaccharides. This chain is N-acetyllactosaminide beta-1,3-N-acetylglucosaminyltransferase 4 (B3gnt4), found in Mus musculus (Mouse).